Consider the following 815-residue polypeptide: MPAPHGLSPLSKAFLMRRAFQRRILPHSLAMALSLPLAGYVQAQEVEFDIPPQALGSALQEFGRQADIQVLYRPEEVRNKRSSAIKGKLEPNQAITELLRGTGASVDFQGNAITISVAEAADSSVDLGATMITSNQLGTITEDSGSYTPGTIATATRLVLTPRETPQSITVVTRQNMDDFGLNNIDDVMRHTPGITVSAYDTDRNNYYARGFSINNFQYDGIPSTARNVGYSAGNTLSDMAIYDRVEVLKGATGLLTGAGSLGATINLIRKKPTHEFKGHVELGAGSWDNYRSELDVSGPLTESGNVRGRAVAAYQDKHSFMDHYERKTSVYYGILEFDLNPDTMLTVGADYQDNDPKGSGWSGSFPLFDSQGNRNDVSRSFNNGAKWSSWEQYTRTVFANLEHNFANGWVGKVQLDHKINGYHAPLGAIMGDWPAPDNSAKIVAQKYTGETKSNSLDIYLTGPFQFLGREHELVVGTSASFSHWEGKSYWNLRNYDNTTDDFINWDGDIGKPDWGTPSQYIDDKTRQLGSYMTARFNVTDDLNLFLGGRVVDYRVTGLNPTIRESGRFIPYVGAVYDLNDTYSVYASYTDIFMPQDSWYRDSSNKLLEPDEGQNYEIGIKGEYLDGRLNTSLAYFEIHEENRAEEDALYNSKPTNPAITYAYKGIKAKTKGYEAEISGELAPGWQVQAGYTHKIIRDDSGKKVSTWEPQDQLSLYTSYKFKGALDKLTVGGGARWQGKSWQMVYNNPRSRWEKFSQEDYWLVDLMARYQITDKLSASVNVNNVFDKTYYTNIGFYTSASYGDPRNLMFSTRWDF.

A signal peptide spans 1–43 (MPAPHGLSPLSKAFLMRRAFQRRILPHSLAMALSLPLAGYVQA). The region spanning 161–271 (TPRETPQSIT…LGATINLIRK (111 aa)) is the TBDR plug domain. The TBDR beta-barrel domain occupies 276 to 815 (EFKGHVELGA…NLMFSTRWDF (540 aa)). A TonB C-terminal box motif is present at residues 798 to 815 (SASYGDPRNLMFSTRWDF).

Belongs to the TonB-dependent receptor family.

It is found in the cell outer membrane. In terms of biological role, receptor for the siderophore ferripyoverdine. The chain is Ferripyoverdine receptor (fpvA) from Pseudomonas aeruginosa (strain ATCC 15692 / DSM 22644 / CIP 104116 / JCM 14847 / LMG 12228 / 1C / PRS 101 / PAO1).